Consider the following 163-residue polypeptide: Nucleotide-binding protein HD_0358 (163 aa).

It belongs to the YajQ family.

Nucleotide-binding protein. The polypeptide is Nucleotide-binding protein HD_0358 (Haemophilus ducreyi (strain 35000HP / ATCC 700724)).